An 874-amino-acid polypeptide reads, in one-letter code: Valine--tRNA ligase (874 aa).

Residues 46 to 56 carry the 'HIGH' region motif; the sequence is PNVTGHLHIGH. The 'KMSKS' region motif lies at 523 to 527; that stretch reads KMSKS. Lys526 lines the ATP pocket. A coiled-coil region spans residues 805-874; that stretch reads DYVFQMKKAS…TLTDLKQKVK (70 aa).

Belongs to the class-I aminoacyl-tRNA synthetase family. ValS type 1 subfamily. Monomer.

It localises to the cytoplasm. It catalyses the reaction tRNA(Val) + L-valine + ATP = L-valyl-tRNA(Val) + AMP + diphosphate. Catalyzes the attachment of valine to tRNA(Val). As ValRS can inadvertently accommodate and process structurally similar amino acids such as threonine, to avoid such errors, it has a 'posttransfer' editing activity that hydrolyzes mischarged Thr-tRNA(Val) in a tRNA-dependent manner. The chain is Valine--tRNA ligase from Ureaplasma parvum serovar 3 (strain ATCC 700970).